Here is a 1250-residue protein sequence, read N- to C-terminus: Protein SSD1 (1250 aa).

Over residues 1–22 (MSKNSNVNNNRSQEPNNMFVQT) the composition is skewed to polar residues. The tract at residues 1–32 (MSKNSNVNNNRSQEPNNMFVQTTGGGKNAPKQ) is disordered. Ser-2 carries the N-acetylserine modification. Phosphoserine is present on Ser-40. A disordered region spans residues 79-163 (TGQYLSGNSG…SSIYGHSRRH (85 aa)). The span at 84–94 (SGNSGSNNHFT) shows a compositional bias: polar residues. Residues 124 to 145 (NNSGYYHNSYDNNNNSNNPGSN) are compositionally biased toward low complexity. Phosphoserine occurs at positions 164 and 183. The span at 197–208 (QADSGSNSTTEQ) shows a compositional bias: polar residues. Disordered stretches follow at residues 197-338 (QADS…GGRK), 418-443 (KEKE…SSDD), and 455-517 (SNNF…DDVE). A Phosphothreonine modification is found at Thr-227. The segment covering 264 to 276 (NEYSPGINSNWRN) has biased composition (polar residues). The segment covering 277–287 (QSQQPQQQLSP) has biased composition (low complexity). A phosphoserine mark is found at Ser-286 and Ser-322. The span at 319–329 (SNSSVHSFSSQ) shows a compositional bias: polar residues. The segment covering 481–495 (STINNDSDSLSSPTK) has biased composition (polar residues). A phosphoserine mark is found at Ser-491 and Ser-492. Over residues 497–510 (GVRRRSSLKQRPTQ) the composition is skewed to basic residues. The CSD2 domain maps to 582–657 (AWFKPTDKKV…EIDSILRDNN (76 aa)). Tyr-688 bears the Phosphotyrosine mark. The RNB domain occupies 694–1015 (DTNEYNIFAI…VHRQLKAVIH (322 aa)). The DIS3L2 C-terminal domain maps to 1064 to 1148 (GQLLTMATVL…SIKNKFRSTA (85 aa)).

Belongs to the RNR ribonuclease family.

Its function is as follows. Can suppress the lethality due to deletion of SIT4, and partially the defects due to BCY1 disruption. Is implicated in the control of the cell cycle G1 phase. The protein is Protein SSD1 (SSD1) of Saccharomyces cerevisiae (strain ATCC 204508 / S288c) (Baker's yeast).